Here is a 1007-residue protein sequence, read N- to C-terminus: Bifunctional glutamine synthetase adenylyltransferase/adenylyl-removing enzyme (1007 aa).

The tract at residues M1 to L496 is adenylyl removase. Residues N505–A1007 are adenylyl transferase.

This sequence belongs to the GlnE family. Mg(2+) is required as a cofactor.

It carries out the reaction [glutamine synthetase]-O(4)-(5'-adenylyl)-L-tyrosine + phosphate = [glutamine synthetase]-L-tyrosine + ADP. It catalyses the reaction [glutamine synthetase]-L-tyrosine + ATP = [glutamine synthetase]-O(4)-(5'-adenylyl)-L-tyrosine + diphosphate. Its function is as follows. Involved in the regulation of glutamine synthetase GlnA, a key enzyme in the process to assimilate ammonia. When cellular nitrogen levels are high, the C-terminal adenylyl transferase (AT) inactivates GlnA by covalent transfer of an adenylyl group from ATP to specific tyrosine residue of GlnA, thus reducing its activity. Conversely, when nitrogen levels are low, the N-terminal adenylyl removase (AR) activates GlnA by removing the adenylyl group by phosphorolysis, increasing its activity. The regulatory region of GlnE binds the signal transduction protein PII (GlnB) which indicates the nitrogen status of the cell. In Leifsonia xyli subsp. xyli (strain CTCB07), this protein is Bifunctional glutamine synthetase adenylyltransferase/adenylyl-removing enzyme.